Consider the following 394-residue polypeptide: Dual-specificity RNA methyltransferase RlmN (394 aa).

The Proton acceptor role is filled by E116. A Radical SAM core domain is found at 122–365 (EEDRGTLCVS…SPIRTPRGED (244 aa)). C129 and C370 are disulfide-bonded. C136, C140, and C143 together coordinate [4Fe-4S] cluster. S-adenosyl-L-methionine contacts are provided by residues 196–197 (GE), S228, 250–252 (SFH), and N327. C370 (S-methylcysteine intermediate) is an active-site residue.

The protein belongs to the radical SAM superfamily. RlmN family. The cofactor is [4Fe-4S] cluster.

Its subcellular location is the cytoplasm. It catalyses the reaction adenosine(2503) in 23S rRNA + 2 reduced [2Fe-2S]-[ferredoxin] + 2 S-adenosyl-L-methionine = 2-methyladenosine(2503) in 23S rRNA + 5'-deoxyadenosine + L-methionine + 2 oxidized [2Fe-2S]-[ferredoxin] + S-adenosyl-L-homocysteine. The catalysed reaction is adenosine(37) in tRNA + 2 reduced [2Fe-2S]-[ferredoxin] + 2 S-adenosyl-L-methionine = 2-methyladenosine(37) in tRNA + 5'-deoxyadenosine + L-methionine + 2 oxidized [2Fe-2S]-[ferredoxin] + S-adenosyl-L-homocysteine. Specifically methylates position 2 of adenine 2503 in 23S rRNA and position 2 of adenine 37 in tRNAs. m2A2503 modification seems to play a crucial role in the proofreading step occurring at the peptidyl transferase center and thus would serve to optimize ribosomal fidelity. In Dinoroseobacter shibae (strain DSM 16493 / NCIMB 14021 / DFL 12), this protein is Dual-specificity RNA methyltransferase RlmN.